Reading from the N-terminus, the 467-residue chain is 3-isopropylmalate dehydratase large subunit (467 aa).

[4Fe-4S] cluster is bound by residues Cys-348, Cys-409, and Cys-412. The disordered stretch occupies residues 423–449 (NERSISTSNRNFEGRQGKGSRTHLASP).

The protein belongs to the aconitase/IPM isomerase family. LeuC type 1 subfamily. Heterodimer of LeuC and LeuD. Requires [4Fe-4S] cluster as cofactor.

It catalyses the reaction (2R,3S)-3-isopropylmalate = (2S)-2-isopropylmalate. The protein operates within amino-acid biosynthesis; L-leucine biosynthesis; L-leucine from 3-methyl-2-oxobutanoate: step 2/4. In terms of biological role, catalyzes the isomerization between 2-isopropylmalate and 3-isopropylmalate, via the formation of 2-isopropylmaleate. This Bifidobacterium longum subsp. infantis (strain ATCC 15697 / DSM 20088 / JCM 1222 / NCTC 11817 / S12) protein is 3-isopropylmalate dehydratase large subunit.